Here is an 88-residue protein sequence, read N- to C-terminus: FXYD domain-containing ion transport regulator 3 (88 aa).

Positions Met1–Ala20 are cleaved as a signal peptide. At Asn21–Arg38 the chain is on the extracellular side. Residues Val39–Gly59 form a helical membrane-spanning segment. Over Lys60–Cys88 the chain is Cytoplasmic. The interval Ser66–Cys88 is disordered.

It belongs to the FXYD family. In terms of assembly, regulatory subunit of the sodium/potassium-transporting ATPase which is composed of a catalytic alpha subunit, a non-catalytic beta subunit and an additional regulatory subunit. Interacts with catalytic alpha subunit ATP1A1. Also interacts with non-catalytic beta subunit ATP1B1. Interacts with the alpha1-beta1, alpha2-beta1 and alpha3-beta1 NKA isozymes. In terms of processing, glutathionylated.

It localises to the cell membrane. In terms of biological role, associates with and regulates the activity of the sodium/potassium-transporting ATPase (NKA) which transports Na(+) out of the cell and K(+) into the cell. Reduces glutathionylation of the NKA beta-1 subunit ATP1B1, thus reversing glutathionylation-mediated inhibition of ATP1B1. Induces a hyperpolarization-activated chloride current when expressed in Xenopus oocytes. The sequence is that of FXYD domain-containing ion transport regulator 3 (Fxyd3) from Rattus norvegicus (Rat).